The primary structure comprises 381 residues: Flap endonuclease 1 (381 aa).

The N-domain stretch occupies residues Met1–Arg105. Asp34 contributes to the Mg(2+) binding site. Arg47 and Arg71 together coordinate DNA. Asp87, Glu156, Glu158, Asp177, and Asp179 together coordinate Mg(2+). Positions Glu120–His251 are I-domain. Position 156 (Glu156) interacts with DNA. Residues Gly229 and Asp231 each contribute to the DNA site. Asp231 is a Mg(2+) binding site. The segment at Val339–Phe347 is interaction with PCNA. The disordered stretch occupies residues Ala360–Arg381. Over residues Lys365–Arg381 the composition is skewed to basic residues.

It belongs to the XPG/RAD2 endonuclease family. FEN1 subfamily. As to quaternary structure, interacts with PCNA. Three molecules of FEN1 bind to one PCNA trimer with each molecule binding to one PCNA monomer. PCNA stimulates the nuclease activity without altering cleavage specificity. Mg(2+) serves as cofactor. In terms of processing, phosphorylated. Phosphorylation upon DNA damage induces relocalization to the nuclear plasma.

The protein localises to the nucleus. Its subcellular location is the nucleolus. The protein resides in the nucleoplasm. It localises to the mitochondrion. Structure-specific nuclease with 5'-flap endonuclease and 5'-3' exonuclease activities involved in DNA replication and repair. During DNA replication, cleaves the 5'-overhanging flap structure that is generated by displacement synthesis when DNA polymerase encounters the 5'-end of a downstream Okazaki fragment. It enters the flap from the 5'-end and then tracks to cleave the flap base, leaving a nick for ligation. Also involved in the long patch base excision repair (LP-BER) pathway, by cleaving within the apurinic/apyrimidinic (AP) site-terminated flap. Acts as a genome stabilization factor that prevents flaps from equilibrating into structures that lead to duplications and deletions. Also possesses 5'-3' exonuclease activity on nicked or gapped double-stranded DNA, and exhibits RNase H activity. Also involved in replication and repair of rDNA and in repairing mitochondrial DNA. The protein is Flap endonuclease 1 of Kluyveromyces lactis (strain ATCC 8585 / CBS 2359 / DSM 70799 / NBRC 1267 / NRRL Y-1140 / WM37) (Yeast).